Reading from the N-terminus, the 289-residue chain is MAPKRQSAILPQPKKPRPVAAPKLEDKSASPGLPKGEKEQQEAIEHIDEVQNEIDRLNEQASEEILKVEQKYNKLRQPFFQKRSELIAKIPNFWVTTFVNHPQVSALLGEEDEEALHYLTRVEVTEFEDIKSGYRIDFYFDENPYFENKVLSKEFHLNESGDPSSKSTEIKWKSGKDLTKRSSQTQNKASRKRQHEEPESFFTWFTDHSDAGADELGEVIKDDIWPNPLQYYLVPDMDDEEGEAEDDDDDDEEEEGLEDIDEEGDEDEGEEDDDEDEGEEGEEDEGEDD.

A disordered region spans residues 1–42 (MAPKRQSAILPQPKKPRPVAAPKLEDKSASPGLPKGEKEQQE). A2 carries the post-translational modification N,N,N-trimethylalanine. Phosphoserine is present on S7. P11 is modified (N6-acetyllysine). The residue at position 15 (K15) is a Phosphoserine. K23 is subject to N6-acetyllysine. 3 positions are modified to phosphoserine: L24, S28, and S62. Residues 31–77 (PGLPKGEKEQQEAIEHIDEVQNEIDRLNEQASEEILKVEQKYNKLRQ) are dimerization. N6-acetyllysine is present on K67. The segment at 78–224 (PFFQKRSELI…ELGEVIKDDI (147 aa)) is earmuff domain. Y145 is subject to Phosphotyrosine. An N6-acetyllysine modification is found at K149. Residue K153 forms a Glycyl lysine isopeptide (Lys-Gly) (interchain with G-Cter in ubiquitin) linkage. 2 disordered regions span residues 157 to 206 (LNES…TWFT) and 235 to 289 (PDMD…GEDD). The segment covering 168–180 (TEIKWKSGKDLTK) has biased composition (basic and acidic residues). Position 171 is an N6-acetyllysine (K171). Over residues 236–289 (DMDDEEGEAEDDDDDDEEEEGLEDIDEEGDEDEGEEDDDEDEGEEGEEDEGEDD) the composition is skewed to acidic residues.

Belongs to the nucleosome assembly protein (NAP) family. Headphone-shaped homodimer. Isoform 1 and isoform 2 interact directly with each other and with ANP32A within the tripartite INHAT (inhibitor of acetyltransferases) complex. Isoform 1 and isoform 2 interact also with histones. Isoform 2 is a omponent of the SET complex, composed of at least ANP32A, APEX1, HMGB2, NME1, SET and TREX1, but not NME2 or TREX2. Within this complex, directly interacts with ANP32A, NME1, HMGB2 and TREX1; the interaction with ANP32A is enhanced after cleavage. Interacts with APBB1, CHTOP, SETBP1, SGO1. In terms of processing, isoform 2 is phosphorylated on Ser-15 and Ser-24. Isoform 2 is acetylated on Lys-11. Post-translationally, some glutamate residues are glycylated by TTLL8. This modification occurs exclusively on glutamate residues and results in a glycine chain on the gamma-carboxyl group. In terms of processing, N-terminus of isoform 1 is methylated by METTL11A/NTM1. Mainly trimethylated. Cleaved after Lys-176 by GZMA. The cleavage inhibits its nucleosome assembly activity and disrupts the inhibition on NME1. In terms of tissue distribution, widely expressed, with higher expression in brain, thymus, spleen and bone marrow, and lower expression in heart, liver and muscle.

The protein resides in the cytoplasm. Its subcellular location is the cytosol. It is found in the endoplasmic reticulum. It localises to the nucleus. The protein localises to the nucleoplasm. Its function is as follows. Multitasking protein, involved in apoptosis, transcription, nucleosome assembly and histone chaperoning. Isoform 2 anti-apoptotic activity is mediated by inhibition of the GZMA-activated DNase, NME1. In the course of cytotoxic T-lymphocyte (CTL)-induced apoptosis, GZMA cleaves SET, disrupting its binding to NME1 and releasing NME1 inhibition. Isoform 1 and isoform 2 are potent inhibitors of protein phosphatase 2A. Isoform 1 and isoform 2 inhibit EP300/CREBBP and PCAF-mediated acetylation of histones (HAT) and nucleosomes, most probably by masking the accessibility of lysines of histones to the acetylases. The predominant target for inhibition is histone H4. HAT inhibition leads to silencing of HAT-dependent transcription and prevents active demethylation of DNA. Both isoforms stimulate DNA replication of the adenovirus genome complexed with viral core proteins; however, isoform 2 specific activity is higher. The polypeptide is Protein SET (Set) (Rattus norvegicus (Rat)).